Reading from the N-terminus, the 651-residue chain is Peptide-N(4)-(N-acetyl-beta-glucosaminyl)asparagine amidase (651 aa).

The residue at position 2 (A2) is an N-acetylalanine. In terms of domain architecture, PUB spans 30 to 91 (EASKLLLTYA…EGETHLIFPK (62 aa)). The segment at 116–153 (SSQKVEFSQHPAAVRLPAEQPEDPTGLMQHSGNQPGQP) is disordered. Positions 143–152 (MQHSGNQPGQ) are enriched in polar residues. Zn(2+) contacts are provided by C247, C250, C280, and C283. C306 functions as the Nucleophile in the catalytic mechanism. Catalysis depends on residues H333 and D350. In terms of domain architecture, PAW spans 451–651 (ELGGRVSGSL…LEIIITFSDL (201 aa)).

It belongs to the transglutaminase-like superfamily. PNGase family. In terms of assembly, component of a complex required to couple retrotranslocation, ubiquitination and deglycosylation composed of NGLY1, SAKS1, AMFR, VCP and RAD23B. Interacts with the proteasome components RAD23B and PSMC1. Interacts with directly with VCP. Interacts with DERL1, bringing it close to the endoplasmic reticulum membrane. Interacts with SAKS1. Zn(2+) is required as a cofactor.

It localises to the cytoplasm. The enzyme catalyses Hydrolysis of an N(4)-(acetyl-beta-D-glucosaminyl)asparagine residue in which the glucosamine residue may be further glycosylated, to yield a (substituted) N-acetyl-beta-D-glucosaminylamine and a peptide containing an aspartate residue.. Inhibited by Z-VAD-fmk, a well-known caspase inhibitor, which inhibits enzyme activity through covalent binding of the carbohydrate to the single Cys-306 residue. Specifically deglycosylates the denatured form of N-linked glycoproteins in the cytoplasm and assists their proteasome-mediated degradation. Cleaves the beta-aspartyl-glucosamine (GlcNAc) of the glycan and the amide side chain of Asn, converting Asn to Asp. Prefers proteins containing high-mannose over those bearing complex type oligosaccharides. Can recognize misfolded proteins in the endoplasmic reticulum that are exported to the cytosol to be destroyed and deglycosylate them, while it has no activity toward native proteins. Deglycosylation is a prerequisite for subsequent proteasome-mediated degradation of some, but not all, misfolded glycoproteins. The sequence is that of Peptide-N(4)-(N-acetyl-beta-glucosaminyl)asparagine amidase (Ngly1) from Rattus norvegicus (Rat).